The following is a 209-amino-acid chain: Putative 3-methyladenine DNA glycosylase (209 aa).

The protein belongs to the DNA glycosylase MPG family.

This Lactiplantibacillus plantarum (strain ATCC BAA-793 / NCIMB 8826 / WCFS1) (Lactobacillus plantarum) protein is Putative 3-methyladenine DNA glycosylase.